The sequence spans 379 residues: Queuine tRNA-ribosyltransferase (379 aa).

The Proton acceptor role is filled by Asp93. Residues 93-97, Asp147, Gln191, and Gly218 each bind substrate; that span reads DSGGF. The segment at 249–255 is RNA binding; sequence GVGKPED. Asp268 functions as the Nucleophile in the catalytic mechanism. The segment at 273–277 is RNA binding; important for wobble base 34 recognition; the sequence is TRNAR. Zn(2+) is bound by residues Cys306, Cys308, Cys311, and His337.

This sequence belongs to the queuine tRNA-ribosyltransferase family. As to quaternary structure, homodimer. Within each dimer, one monomer is responsible for RNA recognition and catalysis, while the other monomer binds to the replacement base PreQ1. Zn(2+) is required as a cofactor.

It catalyses the reaction 7-aminomethyl-7-carbaguanine + guanosine(34) in tRNA = 7-aminomethyl-7-carbaguanosine(34) in tRNA + guanine. It participates in tRNA modification; tRNA-queuosine biosynthesis. Functionally, catalyzes the base-exchange of a guanine (G) residue with the queuine precursor 7-aminomethyl-7-deazaguanine (PreQ1) at position 34 (anticodon wobble position) in tRNAs with GU(N) anticodons (tRNA-Asp, -Asn, -His and -Tyr). Catalysis occurs through a double-displacement mechanism. The nucleophile active site attacks the C1' of nucleotide 34 to detach the guanine base from the RNA, forming a covalent enzyme-RNA intermediate. The proton acceptor active site deprotonates the incoming PreQ1, allowing a nucleophilic attack on the C1' of the ribose to form the product. After dissociation, two additional enzymatic reactions on the tRNA convert PreQ1 to queuine (Q), resulting in the hypermodified nucleoside queuosine (7-(((4,5-cis-dihydroxy-2-cyclopenten-1-yl)amino)methyl)-7-deazaguanosine). The polypeptide is Queuine tRNA-ribosyltransferase (Mannheimia succiniciproducens (strain KCTC 0769BP / MBEL55E)).